A 292-amino-acid polypeptide reads, in one-letter code: Diaminopimelate epimerase (292 aa).

2 residues coordinate substrate: N14 and N81. The active-site Proton donor is the C90. Residues 91–92 (GN), N166, N202, and 220–221 (ER) contribute to the substrate site. C229 acts as the Proton acceptor in catalysis. Position 230-231 (230-231 (GT)) interacts with substrate.

The protein belongs to the diaminopimelate epimerase family. In terms of assembly, homodimer.

The protein resides in the cytoplasm. It catalyses the reaction (2S,6S)-2,6-diaminopimelate = meso-2,6-diaminopimelate. It functions in the pathway amino-acid biosynthesis; L-lysine biosynthesis via DAP pathway; DL-2,6-diaminopimelate from LL-2,6-diaminopimelate: step 1/1. Functionally, catalyzes the stereoinversion of LL-2,6-diaminopimelate (L,L-DAP) to meso-diaminopimelate (meso-DAP), a precursor of L-lysine and an essential component of the bacterial peptidoglycan. The chain is Diaminopimelate epimerase from Rhodococcus erythropolis (strain PR4 / NBRC 100887).